Consider the following 180-residue polypeptide: NAD(P)H-quinone oxidoreductase subunit I, chloroplastic (180 aa).

2 consecutive 4Fe-4S ferredoxin-type domains span residues 55 to 84 (GRIHFEFDKCIACEVCVRVCPIDLPVVDWR) and 95 to 124 (LNYSIDFGICIFCGNCVEYCPTNCLSMTEE). Residues Cys-64, Cys-67, Cys-70, Cys-74, Cys-104, Cys-107, Cys-110, and Cys-114 each contribute to the [4Fe-4S] cluster site.

This sequence belongs to the complex I 23 kDa subunit family. In terms of assembly, NDH is composed of at least 16 different subunits, 5 of which are encoded in the nucleus. It depends on [4Fe-4S] cluster as a cofactor.

It localises to the plastid. It is found in the chloroplast thylakoid membrane. The catalysed reaction is a plastoquinone + NADH + (n+1) H(+)(in) = a plastoquinol + NAD(+) + n H(+)(out). It catalyses the reaction a plastoquinone + NADPH + (n+1) H(+)(in) = a plastoquinol + NADP(+) + n H(+)(out). Functionally, NDH shuttles electrons from NAD(P)H:plastoquinone, via FMN and iron-sulfur (Fe-S) centers, to quinones in the photosynthetic chain and possibly in a chloroplast respiratory chain. The immediate electron acceptor for the enzyme in this species is believed to be plastoquinone. Couples the redox reaction to proton translocation, and thus conserves the redox energy in a proton gradient. This Illicium oligandrum (Star anise) protein is NAD(P)H-quinone oxidoreductase subunit I, chloroplastic.